The primary structure comprises 411 residues: Arginase (411 aa).

A disordered region spans residues Asn83–Asn106. Residues His193, Asp216, His218, and Asp220 each contribute to the Mn(2+) site. Positions 222, 229, and 274 each coordinate L-arginine. The Mn(2+) site is built by Asp323 and Asp325.

The protein belongs to the arginase family. As to quaternary structure, homotrimer; oligomerization is dependent on Mn(2+) binding. Mn(2+) is required as a cofactor.

The enzyme catalyses L-arginine + H2O = urea + L-ornithine. The protein operates within nitrogen metabolism; urea cycle; L-ornithine and urea from L-arginine: step 1/1. Feedback inhibition by product L-ornithine,. Inhibited by 2(S)-amino-6-boronohexanoic acid (ABH); however, with less efficiency than human ARG1. Functionally, catalyzes the hydrolysis of L-arginine into urea and L-ornithine, which is a precursor for polyamine biosynthesis. May play a role in parasite intra-hepatic development during the host liver stage. The polypeptide is Arginase (Plasmodium falciparum (isolate 3D7)).